The primary structure comprises 980 residues: Protein translocase subunit SecA (980 aa).

Residues Gln-109, 127-131 (GEGKT), and Asp-529 contribute to the ATP site. The segment at 954–980 (QKIGRNDPCPCGSGKKYKHCHGKDNPQ) is disordered. Zn(2+) contacts are provided by Cys-962, Cys-964, Cys-973, and His-974.

This sequence belongs to the SecA family. As to quaternary structure, monomer and homodimer. Part of the essential Sec protein translocation apparatus which comprises SecA, SecYEG and auxiliary proteins SecDF. Other proteins may also be involved. The cofactor is Zn(2+).

It is found in the cell inner membrane. The protein localises to the cytoplasm. The enzyme catalyses ATP + H2O + cellular proteinSide 1 = ADP + phosphate + cellular proteinSide 2.. Its function is as follows. Part of the Sec protein translocase complex. Interacts with the SecYEG preprotein conducting channel. Has a central role in coupling the hydrolysis of ATP to the transfer of proteins into and across the cell membrane, serving as an ATP-driven molecular motor driving the stepwise translocation of polypeptide chains across the membrane. The protein is Protein translocase subunit SecA of Brachyspira hyodysenteriae (strain ATCC 49526 / WA1).